A 275-amino-acid polypeptide reads, in one-letter code: Formamidopyrimidine-DNA glycosylase (275 aa).

Pro2 acts as the Schiff-base intermediate with DNA in catalysis. The active-site Proton donor is the Glu3. The active-site Proton donor; for beta-elimination activity is Lys58. Residues His93, Arg111, and Arg156 each coordinate DNA. Residues 241-275 form an FPG-type zinc finger; the sequence is FVYDRAGQPCRVCGTPIRQIVQGQRSTYYCPTCQR. Arg265 acts as the Proton donor; for delta-elimination activity in catalysis.

It belongs to the FPG family. As to quaternary structure, monomer. It depends on Zn(2+) as a cofactor.

The enzyme catalyses Hydrolysis of DNA containing ring-opened 7-methylguanine residues, releasing 2,6-diamino-4-hydroxy-5-(N-methyl)formamidopyrimidine.. It catalyses the reaction 2'-deoxyribonucleotide-(2'-deoxyribose 5'-phosphate)-2'-deoxyribonucleotide-DNA = a 3'-end 2'-deoxyribonucleotide-(2,3-dehydro-2,3-deoxyribose 5'-phosphate)-DNA + a 5'-end 5'-phospho-2'-deoxyribonucleoside-DNA + H(+). In terms of biological role, involved in base excision repair of DNA damaged by oxidation or by mutagenic agents. Acts as a DNA glycosylase that recognizes and removes damaged bases. Has a preference for oxidized purines, such as 7,8-dihydro-8-oxoguanine (8-oxoG). Has AP (apurinic/apyrimidinic) lyase activity and introduces nicks in the DNA strand. Cleaves the DNA backbone by beta-delta elimination to generate a single-strand break at the site of the removed base with both 3'- and 5'-phosphates. This Burkholderia cenocepacia (strain ATCC BAA-245 / DSM 16553 / LMG 16656 / NCTC 13227 / J2315 / CF5610) (Burkholderia cepacia (strain J2315)) protein is Formamidopyrimidine-DNA glycosylase.